Reading from the N-terminus, the 187-residue chain is Shikimate kinase (187 aa).

ATP is bound at residue T14–T19. S18 contacts Mg(2+). Substrate contacts are provided by D36, R60, and G82. R120 contributes to the ATP binding site. R147 contributes to the substrate binding site.

It belongs to the shikimate kinase family. Monomer. The cofactor is Mg(2+).

The protein resides in the cytoplasm. The catalysed reaction is shikimate + ATP = 3-phosphoshikimate + ADP + H(+). The protein operates within metabolic intermediate biosynthesis; chorismate biosynthesis; chorismate from D-erythrose 4-phosphate and phosphoenolpyruvate: step 5/7. Functionally, catalyzes the specific phosphorylation of the 3-hydroxyl group of shikimic acid using ATP as a cosubstrate. The sequence is that of Shikimate kinase from Chloroherpeton thalassium (strain ATCC 35110 / GB-78).